A 494-amino-acid chain; its full sequence is Cytochrome c-552 (494 aa).

A signal peptide spans 1–31 (MEKKLKSWQGWLLFGGTMVVVFVLGMIAASV). A heme c-binding site is contributed by His-116. Heme-binding residues include Cys-144, Cys-147, and Lys-148. Cys-182, Cys-185, His-186, Cys-224, Cys-227, and His-228 together coordinate heme c. Ca(2+) is bound by residues Glu-230, Tyr-231, Lys-276, and Gln-278. Tyr-231 is a binding site for substrate. Residue His-279 coordinates substrate. 9 residues coordinate heme c: His-290, Cys-297, Cys-300, His-301, His-315, Cys-328, Cys-331, His-332, and His-407.

It belongs to the cytochrome c-552 family. Ca(2+) serves as cofactor. It depends on heme c as a cofactor.

Its subcellular location is the periplasm. The catalysed reaction is 6 Fe(III)-[cytochrome c] + NH4(+) + 2 H2O = 6 Fe(II)-[cytochrome c] + nitrite + 8 H(+). Its pathway is nitrogen metabolism; nitrate reduction (assimilation). Functionally, catalyzes the reduction of nitrite to ammonia, consuming six electrons in the process. In Parabacteroides distasonis (strain ATCC 8503 / DSM 20701 / CIP 104284 / JCM 5825 / NCTC 11152), this protein is Cytochrome c-552.